Consider the following 1358-residue polypeptide: Insulin-like growth factor 1 receptor (1358 aa).

The first 25 residues, 1–25, serve as a signal peptide directing secretion; it reads MKAELVPVCTAWILGLLLCLGPAAA. Cys-28 and Cys-47 are oxidised to a cystine. 3 N-linked (GlcNAc...) asparagine glycosylation sites follow: Asn-74, Asn-99, and Asn-132. Intrachain disulfides connect Cys-147/Cys-175, Cys-179/Cys-202, Cys-189/Cys-208, Cys-212/Cys-221, Cys-216/Cys-227, Cys-228/Cys-236, Cys-232/Cys-245, Cys-248/Cys-257, Cys-261/Cys-273, Cys-279/Cys-299, Cys-303/Cys-317, Cys-320/Cys-324, and Cys-328/Cys-347. An N-linked (GlcNAc...) asparagine glycan is attached at Asn-241. Asn-310 is a glycosylation site (N-linked (GlcNAc...) asparagine). N-linked (GlcNAc...) asparagine glycosylation is found at Asn-411 and Asn-432. A disulfide bridge links Cys-449 with Cys-482. 4 Fibronectin type-III domains span residues 483-603, 604-702, 727-818, and 829-924; these read ESHV…TDAA, VPSI…TEAE, PRPN…FVFA, and IPGI…LKPD. Asn-488, Asn-528, Asn-616, Asn-634, and Asn-669 each carry an N-linked (GlcNAc...) asparagine glycan. The segment at 670–691 is disordered; sequence GTIDTEGGTEPTKPEGSVGEKG. Over 735–934 the chain is Extracellular; it reads DVLAVGNSTV…VRNNILQMVV (200 aa). Residues Asn-741, Asn-750, Asn-758, Asn-895, and Asn-908 are each glycosylated (N-linked (GlcNAc...) asparagine). A helical transmembrane segment spans residues 935–955; sequence AIPLALSFLLVGIISIVCFVF. Over 956-1358 the chain is Cytoplasmic; sequence KKRNSNRLGN…ALPLPQSSAC (403 aa). Tyr-976 carries the phosphotyrosine; by autocatalysis modification. Residues 995–1270 form the Protein kinase domain; that stretch reads ITMNRELGQG…SIKDELDPGF (276 aa). ATP-binding positions include 1001–1009 and Lys-1029; that span reads LGQGSFGMV. The active-site Proton acceptor is Asp-1131. A phosphotyrosine; by autocatalysis mark is found at Tyr-1157, Tyr-1161, and Tyr-1162. Positions 1336–1358 are disordered; that stretch reads PYAHMNGGRKNERALPLPQSSAC.

Belongs to the protein kinase superfamily. Tyr protein kinase family. Insulin receptor subfamily. Tetramer of 2 alpha and 2 beta chains linked by disulfide bonds. The alpha chains contribute to the formation of the ligand-binding domain, while the beta chain carries the kinase domain. It depends on Mn(2+) as a cofactor. The cytoplasmic domain of the beta subunit is autophosphorylated on Tyr residues in response to low concentrations of insulin-like growth factor (IGF1) and higher concentrations of insulin.

Its subcellular location is the cell membrane. It catalyses the reaction L-tyrosyl-[protein] + ATP = O-phospho-L-tyrosyl-[protein] + ADP + H(+). Autophosphorylation activates the kinase activity. This receptor binds insulin-like growth factor 1 (IGF1) with a high affinity and IGF2 with a lower affinity. It has a tyrosine-protein kinase activity, which is necessary for the activation of the IGF1-stimulated downstream signaling cascade. Plays a role in oocyte maturation. Promotes head development by inhibiting Wnt signaling during embryogenesis. The chain is Insulin-like growth factor 1 receptor (igf1r) from Xenopus laevis (African clawed frog).